Here is a 347-residue protein sequence, read N- to C-terminus: Druantia protein DruD (347 aa).

Its subcellular location is the cytoplasm. In terms of biological role, component of antiviral defense system Druantia type I, composed of DruA, DruB, DruC, DruD and DruE. Expression of Druantia in E.coli (strain MG1655) confers resistance to phage lambda, SECphi18, SECphi27 and T4. This is Druantia protein DruD from Escherichia coli (strain UMEA 4076-1).